The primary structure comprises 51 residues: MSGPLSPVCSCPQLPFMLSPCHMHHHPGHVALSQTVSPASLLTQGLGLPQH.

As to expression, highly expressed in pancreas, heart and liver followed by brain, placenta, lung, skeletal muscle and kidney. Mostly expressed in females.

The protein is Putative inactivation escape 1 protein (INE1) of Homo sapiens (Human).